The sequence spans 68 residues: MAITPDKQKKEQQHQPQNGPLDYAHICKCIAMFFVVAGVVLMFFETGLDPEQKEQIKRLHQLDGIPHA.

A helical membrane pass occupies residues 24–44 (AHICKCIAMFFVVAGVVLMFF).

It localises to the endoplasmic reticulum. It is found in the membrane. This is an uncharacterized protein from Saccharomyces cerevisiae (strain ATCC 204508 / S288c) (Baker's yeast).